A 404-amino-acid polypeptide reads, in one-letter code: CD209 antigen (404 aa).

Residues 1–37 lie on the Cytoplasmic side of the membrane; sequence MSDSKEPRLQQLGLLEEEQLRGLGFRQTRGYKSLAGC. 3 consecutive short sequence motifs (endocytosis signal) follow at residues 14–15, 16–18, and 31–34; these read LL, EEE, and YKSL. The helical; Signal-anchor for type II membrane protein transmembrane segment at 38–58 threads the bilayer; it reads LGHGPLVLQLLSFTLLAGLLV. The Extracellular segment spans residues 59–404; that stretch reads QVSKVPSSIS…APATPNPPPA (346 aa). An N-linked (GlcNAc...) asparagine glycan is attached at Asn-80. A run of 7 repeats spans residues 96–118, 119–141, 142–164, 165–187, 188–210, 211–233, and 234–257. Residues 96 to 257 are 7 X approximate tandem repeats; it reads KLQEIYQELT…AVERLCHPCP (162 aa). Cystine bridges form between Cys-256–Cys-267, Cys-284–Cys-377, and Cys-356–Cys-369. One can recognise a C-type lectin domain in the interval 263-378; sequence FQGNCYFMSN…CNLAKFWICK (116 aa). 6 residues coordinate Ca(2+): Glu-347, Asn-349, Val-351, Glu-354, Asn-365, and Asp-366.

In terms of assembly, homotetramer. Interacts with C1QBP; the interaction is indicative for a C1q:C1QBP:CD209 signaling complex. Interacts with ICAM2 and ICAM3 by binding to mannose-like carbohydrates. Interacts (via C-type lectin domain) with CEACAM1 (via Lewis X moieties); this interaction is regulated by the glycosylation pattern of CEACAM1 on cell types and regulates contact between dendritic cells and neutrophils. As to quaternary structure, (Microbial infection) Interacts with HIV-1 and HIV-2 gp120. (Microbial infection) Interacts with ebolavirus envelope glycoproteins. In terms of assembly, (Microbial infection) Interacts with cytomegalovirus gB protein. As to quaternary structure, (Microbial infection) Interacts with HCV E2 protein. (Microbial infection) Interacts with dengue virus major envelope protein E. In terms of assembly, (Microbial infection) Interacts with measles hemagglutinin. As to quaternary structure, (Microbial infection) Interacts with herpes simplex virus 1 surface proteins. (Microbial infection) Interacts with Influenzavirus A hemagglutinin. In terms of assembly, (Microbial infection) Interacts with SARS-CoV spike glycoprotein. As to quaternary structure, (Microbial infection) Interacts with Japanese encephalitis virus E protein. (Microbial infection) Interacts with Lassa virus Glycoprotein. In terms of assembly, (Microbial infection) Interacts with marburg virus glycoprotein. As to quaternary structure, (Microbial infection) Interacts with Respiratory syncytial virus glycoprotein G. (Microbial infection) Interacts with Rift valley fever virus and uukuniemi virus envelope glycoprotein. In terms of assembly, (Microbial infection) Interacts with west-nile virus envelope glycoprotein. As to quaternary structure, (Microbial infection) Interacts with whole M.bovis cells in a Ca(2+)-dependent and independent manner; in vitro experiments suggest it interacts with CH60.1 (groL1), DnaK, GADPH (gap) and LrpG. Predominantly expressed in dendritic cells and in DC-residing tissues. Also found in placental macrophages, endothelial cells of placental vascular channels, peripheral blood mononuclear cells, and THP-1 monocytes.

It is found in the cell membrane. Its subcellular location is the secreted. Its function is as follows. Pathogen-recognition receptor expressed on the surface of immature dendritic cells (DCs) and involved in initiation of primary immune response. Thought to mediate the endocytosis of pathogens which are subsequently degraded in lysosomal compartments. The receptor returns to the cell membrane surface and the pathogen-derived antigens are presented to resting T-cells via MHC class II proteins to initiate the adaptive immune response. In terms of biological role, on DCs it is a high affinity receptor for ICAM2 and ICAM3 by binding to mannose-like carbohydrates. May act as a DC rolling receptor that mediates transendothelial migration of DC presursors from blood to tissues by binding endothelial ICAM2. Seems to regulate DC-induced T-cell proliferation by binding to ICAM3 on T-cells in the immunological synapse formed between DC and T-cells. Functionally, (Microbial infection) Acts as an attachment receptor for HIV-1 and HIV-2. (Microbial infection) Acts as an attachment receptor for Ebolavirus. Its function is as follows. (Microbial infection) Acts as an attachment receptor for Cytomegalovirus. In terms of biological role, (Microbial infection) Acts as an attachment receptor for HCV. Functionally, (Microbial infection) Acts as an attachment receptor for Dengue virus. (Microbial infection) Acts as an attachment receptor for Measles virus. Its function is as follows. (Microbial infection) Acts as an attachment receptor for Herpes simplex virus 1. In terms of biological role, (Microbial infection) Acts as an attachment receptor for Influenzavirus A. Functionally, (Microbial infection) Acts as an attachment receptor for SARS-CoV. (Microbial infection) Acts as an attachment receptor for Japanese encephalitis virus. Its function is as follows. (Microbial infection) Acts as an attachment receptor for Lassa virus. Acts as an attachment receptor for Marburg virusn. In terms of biological role, (Microbial infection) Acts as an attachment receptor for Respiratory syncytial virus. Functionally, (Microbial infection) Acts as an attachment receptor for Rift valley fever virus and uukuniemi virus. (Microbial infection) Acts as an attachment receptor for West-nile virus. Its function is as follows. (Microbial infection) Probably recognizes in a calcium-dependent manner high mannose N-linked oligosaccharides in a variety of bacterial pathogen antigens, including Leishmania pifanoi LPG, Lewis-x antigen in Helicobacter pylori LPS, mannose in Klebsiella pneumonae LPS, di-mannose and tri-mannose in Mycobacterium tuberculosis ManLAM and Lewis-x antigen in Schistosoma mansoni SEA. Recognition of M.tuberculosis by dendritic cells occurs partially via this molecule. The polypeptide is CD209 antigen (CD209) (Homo sapiens (Human)).